We begin with the raw amino-acid sequence, 87 residues long: Small ribosomal subunit protein uS17 (87 aa).

The protein belongs to the universal ribosomal protein uS17 family. In terms of assembly, part of the 30S ribosomal subunit.

In terms of biological role, one of the primary rRNA binding proteins, it binds specifically to the 5'-end of 16S ribosomal RNA. The sequence is that of Small ribosomal subunit protein uS17 from Bacillus cytotoxicus (strain DSM 22905 / CIP 110041 / 391-98 / NVH 391-98).